Reading from the N-terminus, the 399-residue chain is S-adenosylmethionine synthase (399 aa).

Residue His17 participates in ATP binding. Asp19 is a binding site for Mg(2+). Glu45 serves as a coordination point for K(+). Positions 58 and 101 each coordinate L-methionine. The tract at residues 101–111 (QSADIAMGVDQ) is flexible loop. ATP contacts are provided by residues 177–179 (DGK), 244–245 (RF), Asp253, 259–260 (RK), Ala276, and Lys280. Asp253 contacts L-methionine. Lys284 is an L-methionine binding site.

The protein belongs to the AdoMet synthase family. Homotetramer; dimer of dimers. Mg(2+) is required as a cofactor. K(+) serves as cofactor.

Its subcellular location is the cytoplasm. The catalysed reaction is L-methionine + ATP + H2O = S-adenosyl-L-methionine + phosphate + diphosphate. It participates in amino-acid biosynthesis; S-adenosyl-L-methionine biosynthesis; S-adenosyl-L-methionine from L-methionine: step 1/1. Functionally, catalyzes the formation of S-adenosylmethionine (AdoMet) from methionine and ATP. The overall synthetic reaction is composed of two sequential steps, AdoMet formation and the subsequent tripolyphosphate hydrolysis which occurs prior to release of AdoMet from the enzyme. The polypeptide is S-adenosylmethionine synthase (Bacillus cereus (strain ATCC 10987 / NRS 248)).